A 575-amino-acid polypeptide reads, in one-letter code: Phosphoenolpyruvate-protein phosphotransferase (575 aa).

Position 122 is a phosphotyrosine (Tyr-122). Catalysis depends on His-189, which acts as the Tele-phosphohistidine intermediate. Arg-296 and Arg-332 together coordinate phosphoenolpyruvate. Glu-431 and Asp-455 together coordinate Mg(2+). Phosphoenolpyruvate-binding positions include 454–455 (ND) and Arg-465. Cys-502 functions as the Proton donor in the catalytic mechanism.

The protein belongs to the PEP-utilizing enzyme family. Homodimer. Interacts with the pole-localizer protein TmaR. Binding to TmaR is reversible as long as TmaR can get phosphorylated, whereas binding to non-phosphorylated TmaR is very strong and shifts the equilibrium toward binding. The cofactor is Mg(2+). Phosphorylated on Tyr-122. Phosphorylation on Tyr-122 is important for polar localization but not for interaction with TmaR and for activity.

It is found in the cytoplasm. It carries out the reaction L-histidyl-[protein] + phosphoenolpyruvate = N(pros)-phospho-L-histidyl-[protein] + pyruvate. Its activity is regulated as follows. Inhibited by oxalate. General (non sugar-specific) component of the phosphoenolpyruvate-dependent sugar phosphotransferase system (sugar PTS). This major carbohydrate active-transport system catalyzes the phosphorylation of incoming sugar substrates concomitantly with their translocation across the cell membrane. Enzyme I transfers the phosphoryl group from phosphoenolpyruvate (PEP) to the phosphoryl carrier protein (HPr). Can also use (Z)-3-fluoro-PEP (ZFPEP), (Z)-3-methyl-PEP (ZMePEP), (Z)-3-chloro-PEP (ZClPEP) and (E)-3-chloro-PEP (EClPEP) as alternative phosphoryl donors. This chain is Phosphoenolpyruvate-protein phosphotransferase, found in Escherichia coli (strain K12).